The primary structure comprises 178 residues: Caveolin-1 (178 aa).

Serine 2 is modified (N-acetylserine). Serine 2 is subject to Phosphoserine. The segment at 2–94 (SGGKYVDSEG…WKASFTTFTV (93 aa)) is required for homooligomerization. Residues 2 to 104 (SGGKYVDSEG…TKYWFYRLLS (103 aa)) lie on the Cytoplasmic side of the membrane. Lysine 5 carries the N6-acetyllysine; alternate modification. A Glycyl lysine isopeptide (Lys-Gly) (interchain with G-Cter in ubiquitin); alternate cross-link involves residue lysine 5. Position 6 is a phosphotyrosine (tyrosine 6). A Phosphoserine modification is found at serine 9. The residue at position 14 (tyrosine 14) is a Phosphotyrosine; by ABL1. The residue at position 25 (tyrosine 25) is a Phosphotyrosine. Glycyl lysine isopeptide (Lys-Gly) (interchain with G-Cter in ubiquitin) cross-links involve residues lysine 26, lysine 30, lysine 39, lysine 47, and lysine 57. Residues 82-94 (DGIWKASFTTFTV) are interaction with CAVIN3. An intramembrane region (helical) is located at residues 105–125 (SLVGIPVALIWGIYFAILSFL). At 126-178 (YIWAVVPCIKSFLIKIQCISRIYSICIHTFCDPLYEAIGKIFSNIRISMQKEI) the chain is on the cytoplasmic side. Positions 131-142 (VPCIKSFLIKIQ) are interacts with SPRY1, SPRY2, SPRY3 and SPRY4. 3 S-palmitoyl cysteine lipidation sites follow: cysteine 133, cysteine 143, and cysteine 156. The interval 149–160 (SICIHTFCDPLY) is interacts with SPRY1, SPRY2, and SPRY4. Residues 167 to 178 (FSNIRISMQKEI) form an interacts with SPRY1, SPRY2, SPRY3 and SPRY4 region.

This sequence belongs to the caveolin family. Homooligomer. Interacts with GLIPR2. Interacts with NOSTRIN. Interacts with SNAP25 and STX1A. Interacts (via the N-terminus) with DPP4; the interaction is direct. Interacts with CTNNB1, CDH1 and JUP. Interacts with PACSIN2; this interaction induces membrane tubulation. Interacts with SLC7A9. Interacts with BMX and BTK. Interacts with TGFBR1. Interacts with CAVIN3 (via leucine-zipper domain) in a cholesterol-sensitive manner. Interacts with CAVIN1. Interacts with EHD2 in a cholesterol-dependent manner. Forms a ternary complex with UBXN6 and VCP; mediates CAV1 targeting to lysosomes for degradation. Interacts with ABCG1; this interaction regulates ABCG1-mediated cholesterol efflux. Interacts with NEU3; this interaction enhances NEU3 sialidase activity within caveola. Interacts (via C-terminus) with SPRY1, SPRY2 (via C-terminus), SPRY3, and SPRY4. Interacts with IGFBP5; this interaction allows trafficking of IGFBP5 from the plasma membrane to the nucleus. Phosphorylated at Tyr-14 by ABL1 in response to oxidative stress. In terms of processing, ubiquitinated. Undergo monoubiquitination and multi- and/or polyubiquitination. Monoubiquitination of N-terminal lysines promotes integration in a ternary complex with UBXN6 and VCP which promotes oligomeric CAV1 targeting to lysosomes for degradation. Ubiquitinated by ZNRF1; leading to degradation and modulation of the TLR4-mediated immune response.

Its subcellular location is the golgi apparatus membrane. It is found in the cell membrane. The protein resides in the membrane. The protein localises to the caveola. It localises to the membrane raft. Its function is as follows. May act as a scaffolding protein within caveolar membranes. Forms a stable heterooligomeric complex with CAV2 that targets to lipid rafts and drives caveolae formation. Mediates the recruitment of CAVIN proteins (CAVIN1/2/3/4) to the caveolae. Interacts directly with G-protein alpha subunits and can functionally regulate their activity. Involved in the costimulatory signal essential for T-cell receptor (TCR)-mediated T-cell activation. Its binding to DPP4 induces T-cell proliferation and NF-kappa-B activation in a T-cell receptor/CD3-dependent manner. Recruits CTNNB1 to caveolar membranes and may regulate CTNNB1-mediated signaling through the Wnt pathway. Negatively regulates TGFB1-mediated activation of SMAD2/3 by mediating the internalization of TGFBR1 from membrane rafts leading to its subsequent degradation. Binds 20(S)-hydroxycholesterol (20(S)-OHC). In Atelerix albiventris (Middle-African hedgehog), this protein is Caveolin-1 (CAV1).